The following is a 215-amino-acid chain: MAKPLSERFFIPHEIKVMGRWSTEDVEVRDPSLKPYINLEPRLLPHTHGRHAKKHFGKANVHIVERLINKIMRSGGSHYKVAGHFMRREHRSLNSKKVKAYEVVKEAFKIIEKRTGKNPIQVLVWAIENAAPREDTTSVMFGGIRYHVAVDISPMRRLDVALRNIALGASAKCYRTKMSFAEALAEEIILAANKDPKSYAYSKKLEIERIAESSR.

It belongs to the universal ribosomal protein uS7 family. Part of the 30S ribosomal subunit.

In terms of biological role, one of the primary rRNA binding proteins, it binds directly to 16S rRNA where it nucleates assembly of the head domain of the 30S subunit. Is located at the subunit interface close to the decoding center. This is Small ribosomal subunit protein uS7 from Pyrococcus abyssi (strain GE5 / Orsay).